The chain runs to 89 residues: Small ribosomal subunit protein uS17 (89 aa).

This sequence belongs to the universal ribosomal protein uS17 family. Part of the 30S ribosomal subunit.

Its function is as follows. One of the primary rRNA binding proteins, it binds specifically to the 5'-end of 16S ribosomal RNA. The chain is Small ribosomal subunit protein uS17 from Chlorobaculum tepidum (strain ATCC 49652 / DSM 12025 / NBRC 103806 / TLS) (Chlorobium tepidum).